An 87-amino-acid polypeptide reads, in one-letter code: NADH-ubiquinone oxidoreductase chain 4L (87 aa).

The next 2 membrane-spanning stretches (helical) occupy residues 22–42 (FLSFLILMEFLVITVLFFIIG) and 49–69 (LFLIFLVFSVCELVLGLSLLV).

The protein belongs to the complex I subunit 4L family.

The protein resides in the mitochondrion membrane. It carries out the reaction a ubiquinone + NADH + 5 H(+)(in) = a ubiquinol + NAD(+) + 4 H(+)(out). Its function is as follows. Core subunit of the mitochondrial membrane respiratory chain NADH dehydrogenase (Complex I) that is believed to belong to the minimal assembly required for catalysis. Complex I functions in the transfer of electrons from NADH to the respiratory chain. The immediate electron acceptor for the enzyme is believed to be ubiquinone. The protein is NADH-ubiquinone oxidoreductase chain 4L (ND4L) of Apis mellifera ligustica (Common honeybee).